Reading from the N-terminus, the 250-residue chain is Sugar fermentation stimulation protein homolog (250 aa).

It belongs to the SfsA family.

The sequence is that of Sugar fermentation stimulation protein homolog from Trichodesmium erythraeum (strain IMS101).